Reading from the N-terminus, the 299-residue chain is Lipoyl synthase (299 aa).

[4Fe-4S] cluster is bound by residues cysteine 45, cysteine 50, cysteine 56, cysteine 71, cysteine 75, cysteine 78, and serine 284. A Radical SAM core domain is found at 57-273 (YSKGTATFMI…GDVALAKDFL (217 aa)).

This sequence belongs to the radical SAM superfamily. Lipoyl synthase family. The cofactor is [4Fe-4S] cluster.

It is found in the cytoplasm. The enzyme catalyses [[Fe-S] cluster scaffold protein carrying a second [4Fe-4S](2+) cluster] + N(6)-octanoyl-L-lysyl-[protein] + 2 oxidized [2Fe-2S]-[ferredoxin] + 2 S-adenosyl-L-methionine + 4 H(+) = [[Fe-S] cluster scaffold protein] + N(6)-[(R)-dihydrolipoyl]-L-lysyl-[protein] + 4 Fe(3+) + 2 hydrogen sulfide + 2 5'-deoxyadenosine + 2 L-methionine + 2 reduced [2Fe-2S]-[ferredoxin]. It participates in protein modification; protein lipoylation via endogenous pathway; protein N(6)-(lipoyl)lysine from octanoyl-[acyl-carrier-protein]: step 2/2. Catalyzes the radical-mediated insertion of two sulfur atoms into the C-6 and C-8 positions of the octanoyl moiety bound to the lipoyl domains of lipoate-dependent enzymes, thereby converting the octanoylated domains into lipoylated derivatives. This is Lipoyl synthase from Desulfotalea psychrophila (strain LSv54 / DSM 12343).